Consider the following 123-residue polypeptide: Small ribosomal subunit protein uS13 (123 aa).

Residues 95–123 (GLPVRGQKTKTNARTRKGPKRTVGRKKKK) form a disordered region. Residues 101–123 (QKTKTNARTRKGPKRTVGRKKKK) are compositionally biased toward basic residues.

The protein belongs to the universal ribosomal protein uS13 family. As to quaternary structure, part of the 30S ribosomal subunit. Forms a loose heterodimer with protein S19. Forms two bridges to the 50S subunit in the 70S ribosome.

Located at the top of the head of the 30S subunit, it contacts several helices of the 16S rRNA. In the 70S ribosome it contacts the 23S rRNA (bridge B1a) and protein L5 of the 50S subunit (bridge B1b), connecting the 2 subunits; these bridges are implicated in subunit movement. Contacts the tRNAs in the A and P-sites. The sequence is that of Small ribosomal subunit protein uS13 from Alkaliphilus metalliredigens (strain QYMF).